The chain runs to 148 residues: CDC25-like phosphatase YCH1 (148 aa).

N-acetylmethionine is present on Met1. A Rhodanese domain is found at 29 to 137 (LREPFQVVDV…WQSVYGDDES (109 aa)).

The protein belongs to the MPI phosphatase family.

The protein resides in the cytoplasm. It localises to the nucleus. In terms of biological role, protein phosphatase. This is CDC25-like phosphatase YCH1 (YCH1) from Saccharomyces cerevisiae (strain ATCC 204508 / S288c) (Baker's yeast).